We begin with the raw amino-acid sequence, 132 residues long: ATP synthase epsilon chain (132 aa).

It belongs to the ATPase epsilon chain family. F-type ATPases have 2 components, CF(1) - the catalytic core - and CF(0) - the membrane proton channel. CF(1) has five subunits: alpha(3), beta(3), gamma(1), delta(1), epsilon(1). CF(0) has three main subunits: a, b and c.

It is found in the cell inner membrane. Its function is as follows. Produces ATP from ADP in the presence of a proton gradient across the membrane. This Gloeobacter violaceus (strain ATCC 29082 / PCC 7421) protein is ATP synthase epsilon chain.